We begin with the raw amino-acid sequence, 794 residues long: MAGWIQAQQLQGDALRQMQVLYGQHFPIEVRHYLAQWIESQPWDAIDLDNPQDRAQVTQLLEGLVQELQKKAEHQVGEDGFLLKIKLGHYVHVSSRTRTTAAPWSWLRCIRHILYNEQRLVREATNGNSSAGILVDAMSQKHLQINQTFEELRLVTQDTENELKKLQQTQEYFIIQYQESLRIQAQFAQLAQLNPQERLSRETALQQKQVSLEAWLQREAQTLQQYRVELAEKHQKTLQLLRKQQTIILDDELIQWKRRHDWRGMEAPPRSLDVLQSWCEKLAEIIWQNRQQIRRAEHLCQQLPIPGPVEEMLAEVNATITDIISALVTSTFIIEKQPPQVLKTQTKFAATVRLLVGGKLNVHMNPPQVKATIISEQQAKSLLKNENTRNECSGEILNNCCVMEYHQRTGTLSAHFRNMSLKRIKRADRRGAESVTEEKFTVLFESQFSVGSNELVFQVKTLSLPVVVIVHGSQDHNATATVLWDNAFAEPGRVPFAVPDKVLWPQLCEALNMKFKAEVQSNRGLTKENLLFLAQKLFNNSSSHLEDYNGMSVSWSQFNRENLPGWNYTFWQWFDGVMEVLKKHHKPHWNDGAILGFVNKQQAHDLLINKPDGTFLLRFSDSEIGGITIAWKFDSPDRNLWNLKPFTTREGSIRSLADRLGDLNYLIYVFPDRPKDEVFSKYYTPVLAKAVDGYVKPQIKQVVPEFVSASADSAGSSATYMDQAPSPAVCPQPHYNMYPQNPDPVLDQDGEFDLDETMDVARHVEELLRRPNGQSGPLSPPPAGLFTPARGSLS.

Tyrosine 90 is modified (phosphotyrosine). Serine 129 is modified (phosphoserine). An SH2 domain is found at 589–686; sequence WNDGAILGFV…EVFSKYYTPV (98 aa). A Phosphotyrosine modification is found at tyrosine 682. A Phosphotyrosine; by JAK2 modification is found at tyrosine 694. Positions 765 to 794 are disordered; that stretch reads EELLRRPNGQSGPLSPPPAGLFTPARGSLS.

It belongs to the transcription factor STAT family. In terms of assembly, forms a homodimer or a heterodimer with a related family member. Binds NR3C1. Interacts with NCOA1 and SOCS7. Interacts with ERBB4. Interacts with EBF4. Interacts with CD69. Post-translationally, ISGylated. In terms of processing, tyrosine phosphorylated in response to KITLG/SCF, IL2, IL3, IL7, IL15, CSF2/GMCSF, GH1, PRL, EPO and THPO. Activated KIT promotes phosphorylation on tyrosine residues and subsequent translocation to the nucleus. Tyrosine phosphorylated in response to constitutively activated FGFR1, FGFR2, FGFR3 and FGFR4. Tyrosine phosphorylation is required for DNA-binding activity and dimerization. Serine phosphorylation is also required for maximal transcriptional activity. Tyrosine phosphorylated in response to signaling via activated FLT3; wild-type FLT3 results in much weaker phosphorylation than constitutively activated mutant FLT3. Alternatively, can be phosphorylated by JAK2 at Tyr-694. In terms of tissue distribution, found in mammary gland and, in lesser extent, in ovary, thymus, spleen, kidney, lung, muscle and adrenal gland.

It localises to the cytoplasm. The protein localises to the nucleus. Its function is as follows. Carries out a dual function: signal transduction and activation of transcription. Mediates cellular responses to the cytokine KITLG/SCF and other growth factors. May mediate cellular responses to activated FGFR1, FGFR2, FGFR3 and FGFR4. Binds to the GAS element and activates PRL-induced transcription. Regulates the expression of milk proteins during lactation. The polypeptide is Signal transducer and activator of transcription 5A (STAT5A) (Ovis aries (Sheep)).